Reading from the N-terminus, the 218-residue chain is N-(5'-phosphoribosyl)anthranilate isomerase (218 aa).

The protein belongs to the TrpF family.

It catalyses the reaction N-(5-phospho-beta-D-ribosyl)anthranilate = 1-(2-carboxyphenylamino)-1-deoxy-D-ribulose 5-phosphate. It participates in amino-acid biosynthesis; L-tryptophan biosynthesis; L-tryptophan from chorismate: step 3/5. The sequence is that of N-(5'-phosphoribosyl)anthranilate isomerase from Lachnoclostridium phytofermentans (strain ATCC 700394 / DSM 18823 / ISDg) (Clostridium phytofermentans).